Here is a 221-residue protein sequence, read N- to C-terminus: CASP-like protein 4B1 (221 aa).

The segment at 1 to 78 (MAMQLHAASP…HDHHGGGGGG (78 aa)) is disordered. Residues 1-87 (MAMQLHAASP…GDEATQLLNG (87 aa)) are Cytoplasmic-facing. Residues 19-33 (SPPPPPPLSPHPEPA) show a composition bias toward pro residues. A compositionally biased stretch (low complexity) spans 50 to 62 (APVATATTPLTPG). The chain crosses the membrane as a helical span at residues 88–108 (IVLVLRAGAALLSFVAMALVA). Residues 109–125 (SCRHGDWMDFLRYQEYR) lie on the Extracellular side of the membrane. A helical membrane pass occupies residues 126–146 (YLLGVSVVAFVYSAAQALKNF). The Cytoplasmic segment spans residues 147–160 (RRRRRGAADASFLD). A helical transmembrane segment spans residues 161-181 (FAGDQAVAYLLVTASAAALPI). Topologically, residues 182-196 (TIRMRSAVVNVFTDA) are extracellular. Residues 197 to 217 (IAASIALGFLAFAALALSAML) traverse the membrane as a helical segment. The Cytoplasmic segment spans residues 218-221 (SRHA).

Belongs to the Casparian strip membrane proteins (CASP) family. Homodimer and heterodimers.

Its subcellular location is the cell membrane. This chain is CASP-like protein 4B1, found in Hordeum vulgare subsp. vulgare (Domesticated barley).